Consider the following 254-residue polypeptide: 3-beta-hydroxysteroid dehydrogenase (254 aa).

Residues 12-40 (VTGG…SDIN) and Asp61 each bind NAD(+). Ser139 is a binding site for substrate. Catalysis depends on Tyr152, which acts as the Proton acceptor. Lys156 is an NAD(+) binding site.

The protein belongs to the short-chain dehydrogenases/reductases (SDR) family. Homotetramer.

It catalyses the reaction testosterone + NAD(+) = androst-4-ene-3,17-dione + NADH + H(+). The enzyme catalyses testosterone + NADP(+) = androst-4-ene-3,17-dione + NADPH + H(+). This Comamonas testosteroni (Pseudomonas testosteroni) protein is 3-beta-hydroxysteroid dehydrogenase.